A 436-amino-acid chain; its full sequence is MSDRQQVTNAKGERIAIVAGLRTPFAKQATAFHGVSALDMGKMVVNELLARSELDPKLIEQLVYGQVVQMPAAPNIAREIVLGTGMNVSTDAYSVTRACATSFQSAVNVAESIMTGNIEIGIAGGADSSSVLPIGVSKKLAHALVDLNKARSFGQKLQIFRRLGIKDLLPVPPAVAEYSTGLSMGQTAEQMAKTYNISRADQDALAHRSHTLASETWASGHLRDEVMVAHVPPYKQFIDRDNNIRENSVLESYAKLRPAFDKQHGTVTAANSTPLTDGASAIILMSEGRAKALGYQPIGYIKSYAFSAIDVWQDMLMGPSYATPLALKRAGMELEDLTLIEMHEAFAAQTLANMQMFASKKFAEEKLGRNRAIGEIDMSKFNVLGGSLAYGHPFAATGTRLITQVCRELKRRGGGTGLTTACAAGGLGVAMIVEVE.

Cys-99 functions as the Acyl-thioester intermediate in the catalytic mechanism. Residues His-392 and Cys-422 each act as proton acceptor in the active site.

This sequence belongs to the thiolase-like superfamily. Thiolase family. Heterotetramer of two alpha chains (FadJ) and two beta chains (FadI).

The protein resides in the cytoplasm. It catalyses the reaction an acyl-CoA + acetyl-CoA = a 3-oxoacyl-CoA + CoA. It participates in lipid metabolism; fatty acid beta-oxidation. Functionally, catalyzes the final step of fatty acid oxidation in which acetyl-CoA is released and the CoA ester of a fatty acid two carbons shorter is formed. This chain is 3-ketoacyl-CoA thiolase, found in Shewanella baltica (strain OS155 / ATCC BAA-1091).